A 152-amino-acid polypeptide reads, in one-letter code: Dehydratase aurZ (152 aa).

Positions 34 to 129 (PSLSEKEYRH…APDHVNFADT (96 aa)) constitute an EthD domain.

The protein belongs to the tpcK family.

The catalysed reaction is naphtopyrone YWA1 = norrubrofusarin + H2O + H(+). It functions in the pathway pigment biosynthesis. Its function is as follows. Dehydratase; part of the gene cluster that mediates the biosynthesis of aurofusarin, a red mycelium pigment which is acting as a mycotoxin. The first step is performed by the polyketide synthase which condenses one acetyl-CoA and 6 malonyl-CoA units to form the first intermediate, the cyclic heptaketide and yellow pigment YWA1. The C2 hydroxyl group in the pyrone ring of YWA1 is probably formed during ring closure by an aldol-type cyclization reaction. The dehydratase aurZ then acts as the first tailoring enzyme in the aurofusarin biosynthetic pathway by converting YWA1 to nor-rubrofusarin. Nor-rubrofusarin is then methylated to rubrofusarin by the O-methyltransferase aurJ. Rubrofusarin is then transported across the plasma membrane by the rubrofusarin-specific pump aurT for further enzymatic processing by the extracellular complex composed of GIP1, aurF, aurO and aurS to yield aurofusarin. This Gibberella zeae (strain ATCC MYA-4620 / CBS 123657 / FGSC 9075 / NRRL 31084 / PH-1) (Wheat head blight fungus) protein is Dehydratase aurZ.